The primary structure comprises 200 residues: ATP synthase subunit b 2 (200 aa).

Residues 1 to 16 show a composition bias toward polar residues; sequence MAEQNILTTPSPNADT. A disordered region spans residues 1 to 38; it reads MAEQNILTTPSPNADTTIVPPGSPHTHTEQPSGGHGGA. The chain crosses the membrane as a helical span at residues 46 to 66; the sequence is TFLAQLIWLALAFGLLYYLMS.

It belongs to the ATPase B chain family. F-type ATPases have 2 components, F(1) - the catalytic core - and F(0) - the membrane proton channel. F(1) has five subunits: alpha(3), beta(3), gamma(1), delta(1), epsilon(1). F(0) has three main subunits: a(1), b(2) and c(10-14). The alpha and beta chains form an alternating ring which encloses part of the gamma chain. F(1) is attached to F(0) by a central stalk formed by the gamma and epsilon chains, while a peripheral stalk is formed by the delta and b chains.

It localises to the cell inner membrane. Its function is as follows. F(1)F(0) ATP synthase produces ATP from ADP in the presence of a proton or sodium gradient. F-type ATPases consist of two structural domains, F(1) containing the extramembraneous catalytic core and F(0) containing the membrane proton channel, linked together by a central stalk and a peripheral stalk. During catalysis, ATP synthesis in the catalytic domain of F(1) is coupled via a rotary mechanism of the central stalk subunits to proton translocation. Functionally, component of the F(0) channel, it forms part of the peripheral stalk, linking F(1) to F(0). The b'-subunit is a diverged and duplicated form of b found in plants and photosynthetic bacteria. The polypeptide is ATP synthase subunit b 2 (atpF2) (Methylorubrum populi (strain ATCC BAA-705 / NCIMB 13946 / BJ001) (Methylobacterium populi)).